The sequence spans 282 residues: Ribosomal RNA small subunit methyltransferase A (282 aa).

Positions 28, 30, 55, 77, 103, and 122 each coordinate S-adenosyl-L-methionine.

It belongs to the class I-like SAM-binding methyltransferase superfamily. rRNA adenine N(6)-methyltransferase family. RsmA subfamily.

The protein resides in the cytoplasm. It carries out the reaction adenosine(1518)/adenosine(1519) in 16S rRNA + 4 S-adenosyl-L-methionine = N(6)-dimethyladenosine(1518)/N(6)-dimethyladenosine(1519) in 16S rRNA + 4 S-adenosyl-L-homocysteine + 4 H(+). In terms of biological role, specifically dimethylates two adjacent adenosines (A1518 and A1519) in the loop of a conserved hairpin near the 3'-end of 16S rRNA in the 30S particle. May play a critical role in biogenesis of 30S subunits. This chain is Ribosomal RNA small subunit methyltransferase A, found in Paracoccus denitrificans (strain Pd 1222).